A 77-amino-acid polypeptide reads, in one-letter code: Small ribosomal subunit protein bS20 (77 aa).

Positions 47-77 (ASSSIDKAESKGLIHKNKASRDKARLAAKLG) are disordered.

The protein belongs to the bacterial ribosomal protein bS20 family.

Functionally, binds directly to 16S ribosomal RNA. The protein is Small ribosomal subunit protein bS20 of Streptococcus pyogenes serotype M1.